Reading from the N-terminus, the 565-residue chain is UV-stimulated scaffold protein A homolog (565 aa).

The tract at residues 11 to 156 (RKNLNRILQE…VTLRKTKFVD (146 aa)) is VHS-like. Residues 155–215 (VDYENGEKKI…ELETTMEMLV (61 aa)) are a coiled coil. The UVSSA-type zinc finger occupies 441 to 468 (DRECLAKLPSGALCKRKDMFKCPLHGPL). The Zn(2+) site is built by Cys-444, Cys-454, Cys-462, and His-465. Positions 480 to 510 (DEDRLKEIDRKERKRLKEAEEFSRKIVKEYE) form a coiled coil. Disordered stretches follow at residues 510 to 530 (ESKTKRKRKHEEETSVRSRLQ) and 542 to 565 (VSADITSQQRSRLEKNFSHQFSHL).

It belongs to the UVSSA family.

The protein localises to the chromosome. Functionally, factor involved in transcription-coupled nucleotide excision repair (TC-NER) in response to UV damage. TC-NER allows RNA polymerase II-blocking lesions to be rapidly removed from the transcribed strand of active genes. The protein is UV-stimulated scaffold protein A homolog of Caenorhabditis briggsae.